The following is a 384-amino-acid chain: Na(+)/H(+) antiporter NhaA (384 aa).

The next 11 helical transmembrane spans lie at 17–37 (SGLFLISCTLFSLVIANSAIA), 53–73 (LEYWINDGLMTIFFLLIGLEL), 89–109 (MLPIFGAIGGMIVPAGLFLVM), 118–138 (GAGIPMATDIAFALAILSLLG), 147–167 (IFLTALAVIDDLGAILIIAVF), 171–191 (TLLWTNLCIALGIFGFLLILN), 198–218 (LIPYLIGGVFMWYFMLHSGVH), 251–271 (PVAFFILPLFALANTAIVLSS), 283–303 (IGIALGLIIGKPLGIFLLSML), 321–341 (ILAVGFLGGIGFTMSIFITLL), and 354–374 (FVILISSLIAGIIGYFSLKYV).

The protein belongs to the NhaA Na(+)/H(+) (TC 2.A.33) antiporter family.

Its subcellular location is the cell inner membrane. The enzyme catalyses Na(+)(in) + 2 H(+)(out) = Na(+)(out) + 2 H(+)(in). Its function is as follows. Na(+)/H(+) antiporter that extrudes sodium in exchange for external protons. This Flavobacterium psychrophilum (strain ATCC 49511 / DSM 21280 / CIP 103535 / JIP02/86) protein is Na(+)/H(+) antiporter NhaA.